Here is a 437-residue protein sequence, read N- to C-terminus: Elongation factor 1-gamma (437 aa).

At Ala-2 the chain carries N-acetylalanine. In terms of domain architecture, GST N-terminal spans 2–87 (AAGTLYTYPE…YVSNEELRGS (86 aa)). Positions 88 to 216 (TPEAAAQVVQ…VKLCEKMAQF (129 aa)) constitute a GST C-terminal domain. Residues Lys-147 and Lys-212 each carry the N6-acetyllysine modification. Basic and acidic residues predominate over residues 221–254 (FAETQPKKDTPRKEKGSREEKQKPQAERKEEKKA). A disordered region spans residues 221–268 (FAETQPKKDTPRKEKGSREEKQKPQAERKEEKKAAAPAPEEEMDECEQ). Residue Lys-253 forms a Glycyl lysine isopeptide (Lys-Gly) (interchain with G-Cter in SUMO1) linkage. One can recognise an EF-1-gamma C-terminal domain in the interval 276–437 (AKDPFAHLPK…KAFNQGKIFK (162 aa)). A Glycyl lysine isopeptide (Lys-Gly) (interchain with G-Cter in SUMO2) cross-link involves residue Lys-285. Lys-401 carries the N6-acetyllysine modification. At Lys-434 the chain carries N6-acetyllysine; alternate. The residue at position 434 (Lys-434) is an N6-malonyllysine; alternate.

EF-1 is composed of four subunits: alpha, beta, delta, and gamma.

In terms of biological role, probably plays a role in anchoring the complex to other cellular components. This is Elongation factor 1-gamma (EEF1G) from Macaca fascicularis (Crab-eating macaque).